The chain runs to 211 residues: Arginine exporter protein ArgO (211 aa).

6 helical membrane passes run 1-21, 37-57, 68-88, 111-131, 147-167, and 186-206; these read MLSY…PLGP, LMIA…GIFG, LLAL…FGAL, IIAT…DTFV, WFAL…ALLA, and LVGL…IHHI.

Belongs to the LysE/ArgO transporter (TC 2.A.75) family.

Its subcellular location is the cell inner membrane. The catalysed reaction is L-arginine(in) = L-arginine(out). Its function is as follows. Involved in the export of arginine. Important to control the intracellular level of arginine and the correct balance between arginine and lysine. This chain is Arginine exporter protein ArgO, found in Enterobacter sp. (strain 638).